We begin with the raw amino-acid sequence, 271 residues long: Chymotrypsin-like elastase family member 2A (271 aa).

The signal sequence occupies residues 1 to 16 (MIRTLLLSALVAGALS). Residues 17 to 30 (CGYPTYEVEDDVSR) constitute a propeptide, activation peptide. Residues 31–269 (VVGGQEATPN…YIDWINSVMA (239 aa)) enclose the Peptidase S1 domain. C60 and C76 are joined by a disulfide. Catalysis depends on charge relay system residues H75 and D123. 3 cysteine pairs are disulfide-bonded: C157/C224, C188/C204, and C214/C245. Residue S218 is the Charge relay system of the active site.

This sequence belongs to the peptidase S1 family. Elastase subfamily. As to quaternary structure, interacts with CPA1. Interacts with SERPINA1. As to expression, highly expressed in pancreas (at mRNA and protein levels). Also expressed in adrenal gland and small intestine.

The protein localises to the secreted. The enzyme catalyses Preferential cleavage: Leu-|-Xaa, Met-|-Xaa and Phe-|-Xaa. Hydrolyzes elastin.. Its function is as follows. Elastase that enhances insulin signaling and might have a physiologic role in cellular glucose metabolism. Circulates in plasma and reduces platelet hyperactivation, triggers both insulin secretion and degradation, and increases insulin sensitivity. In Mus musculus (Mouse), this protein is Chymotrypsin-like elastase family member 2A.